We begin with the raw amino-acid sequence, 98 residues long: NADH-ubiquinone oxidoreductase chain 4L (98 aa).

The next 3 helical transmembrane spans lie at 1-21, 26-46, and 61-81; these read MNLI…GLIF, IINI…LFVL, and LYIL…VVIL.

It belongs to the complex I subunit 4L family.

The protein resides in the mitochondrion membrane. It carries out the reaction a ubiquinone + NADH + 5 H(+)(in) = a ubiquinol + NAD(+) + 4 H(+)(out). In terms of biological role, core subunit of the mitochondrial membrane respiratory chain NADH dehydrogenase (Complex I) that is believed to belong to the minimal assembly required for catalysis. Complex I functions in the transfer of electrons from NADH to the respiratory chain. The immediate electron acceptor for the enzyme is believed to be ubiquinone. The chain is NADH-ubiquinone oxidoreductase chain 4L (nad4L) from Dictyostelium discoideum (Social amoeba).